A 95-amino-acid chain; its full sequence is Co-chaperonin GroES (95 aa).

The tract at residues 20 to 45 (KTKGGLIIPDSAKEKPAEGEITSVGE) is disordered.

It belongs to the GroES chaperonin family. Heptamer of 7 subunits arranged in a ring. Interacts with the chaperonin GroEL.

It is found in the cytoplasm. Its function is as follows. Together with the chaperonin GroEL, plays an essential role in assisting protein folding. The GroEL-GroES system forms a nano-cage that allows encapsulation of the non-native substrate proteins and provides a physical environment optimized to promote and accelerate protein folding. GroES binds to the apical surface of the GroEL ring, thereby capping the opening of the GroEL channel. The protein is Co-chaperonin GroES of Paracoccus denitrificans.